The primary structure comprises 279 residues: Thymidylate synthase 1 (279 aa).

Position 141–142 (141–142) interacts with dUMP; it reads RR. The active-site Nucleophile is the C161. DUMP-binding positions include 181-184, N192, and 222-224; these read RSND and HVY. D184 is a binding site for (6R)-5,10-methylene-5,6,7,8-tetrahydrofolate. A278 serves as a coordination point for (6R)-5,10-methylene-5,6,7,8-tetrahydrofolate.

The protein belongs to the thymidylate synthase family. Bacterial-type ThyA subfamily. Homodimer.

It is found in the cytoplasm. It catalyses the reaction dUMP + (6R)-5,10-methylene-5,6,7,8-tetrahydrofolate = 7,8-dihydrofolate + dTMP. Its pathway is pyrimidine metabolism; dTTP biosynthesis. In terms of biological role, catalyzes the reductive methylation of 2'-deoxyuridine-5'-monophosphate (dUMP) to 2'-deoxythymidine-5'-monophosphate (dTMP) while utilizing 5,10-methylenetetrahydrofolate (mTHF) as the methyl donor and reductant in the reaction, yielding dihydrofolate (DHF) as a by-product. This enzymatic reaction provides an intracellular de novo source of dTMP, an essential precursor for DNA biosynthesis. This is Thymidylate synthase 1 from Bacillus spizizenii (strain ATCC 23059 / NRRL B-14472 / W23) (Bacillus subtilis subsp. spizizenii).